Here is a 259-residue protein sequence, read N- to C-terminus: Zinc import ATP-binding protein ZnuC (259 aa).

An ABC transporter domain is found at 22-238; the sequence is VEARGLTVRR…PEYRALFGAH (217 aa). An ATP-binding site is contributed by 54–61; that stretch reads GPNGSGKS.

The protein belongs to the ABC transporter superfamily. Zinc importer (TC 3.A.1.15.5) family. The complex is composed of two ATP-binding proteins (ZnuC), two transmembrane proteins (ZnuB) and a solute-binding protein (ZnuA).

It localises to the cell inner membrane. It catalyses the reaction Zn(2+)(out) + ATP(in) + H2O(in) = Zn(2+)(in) + ADP(in) + phosphate(in) + H(+)(in). In terms of biological role, part of the ABC transporter complex ZnuABC involved in zinc import. Responsible for energy coupling to the transport system. This chain is Zinc import ATP-binding protein ZnuC, found in Alkalilimnicola ehrlichii (strain ATCC BAA-1101 / DSM 17681 / MLHE-1).